We begin with the raw amino-acid sequence, 465 residues long: Poly(A) polymerase I (465 aa).

Catalysis depends on residues D80, D82, and D162. Residues 429-465 (SAPPDQKGMLNELDEEPSPRRRTRRPRKRAPRREGTA) form a disordered region. Basic residues predominate over residues 448-459 (RRRTRRPRKRAP).

This sequence belongs to the tRNA nucleotidyltransferase/poly(A) polymerase family.

It catalyses the reaction RNA(n) + ATP = RNA(n)-3'-adenine ribonucleotide + diphosphate. Functionally, adds poly(A) tail to the 3' end of many RNAs, which usually targets these RNAs for decay. Plays a significant role in the global control of gene expression, through influencing the rate of transcript degradation, and in the general RNA quality control. In Escherichia coli O157:H7, this protein is Poly(A) polymerase I.